The following is a 440-amino-acid chain: Xylose isomerase (440 aa).

Catalysis depends on residues His-99 and Asp-102. Glu-230, Glu-266, His-269, Asp-294, Asp-305, Asp-307, and Asp-337 together coordinate Mg(2+).

This sequence belongs to the xylose isomerase family. Homotetramer. It depends on Mg(2+) as a cofactor.

It localises to the cytoplasm. It catalyses the reaction alpha-D-xylose = alpha-D-xylulofuranose. This Halalkalibacterium halodurans (strain ATCC BAA-125 / DSM 18197 / FERM 7344 / JCM 9153 / C-125) (Bacillus halodurans) protein is Xylose isomerase.